The sequence spans 517 residues: GMP synthase [glutamine-hydrolyzing] (517 aa).

One can recognise a Glutamine amidotransferase type-1 domain in the interval K9–D202. Catalysis depends on C86, which acts as the Nucleophile. Active-site residues include H176 and E178. Positions W203 to R392 constitute a GMPS ATP-PPase domain. S230–S236 serves as a coordination point for ATP.

Homodimer.

It catalyses the reaction XMP + L-glutamine + ATP + H2O = GMP + L-glutamate + AMP + diphosphate + 2 H(+). The protein operates within purine metabolism; GMP biosynthesis; GMP from XMP (L-Gln route): step 1/1. Its function is as follows. Catalyzes the synthesis of GMP from XMP. The chain is GMP synthase [glutamine-hydrolyzing] from Streptococcus mutans serotype c (strain ATCC 700610 / UA159).